The chain runs to 1297 residues: MPLAFTNPGTPLKRTAAYDNVQWNQNRILTFGTRYTVLIIVNNYESYQNIQFGESIGAVALDQRTGFLAIAHGQVLDIYKPADSLKWTHHYNYITQLSEDITQLSWGYNFDLLLCASSYTKLINFSEDKPRLVWSQNRISDSFLSSTISSDACFIASIETKNPLAKVWQRTSPQGTVSSCDDFSYLVHPCRVRFSQWSKHLHPDASGSTPFLSTVGYDNVLRIWQVGSRFGSQLMHLSCFLNLRKYYKSDQPPYCCFIDKDDFTIALAHAISRHSGQVHKDRILNRLLALASGQPHIFLLFTFECLYIFSLVIDQETLSSFELINQVPTNFPKGALQPDGFIPIYRTSKHEFYDYNIILFFQNSAREYMFSLTDFFYSDFELRVSYDFYGHDYPIKSLTRTSNGHGIVSRDVNRICMFQSYISQDGKNQLICRFRLLLGESDFILPLYAGEYAAVLNLNSLKLWHCNEAIPPTLLCTCRQVPTSPIITFFILPVQNNDNSALCALTEGGHAWFWSVSNEAHDGSAVLRFIDRVNFTKNLNIASAVDVMGWSSTLNLSSLSSFDQEVFQSISKDGLLQTWMARVLGDDKAEISEISKVQTSIKSATMIKGSTSKKVAVVSENNRRLSIFDTRSSEFSEKEEFSSVFDDYGPINDLDWTSTPNSHSILAVGFLHDVILLCQNRRSYMNDIPCWSRIRRYNLLEYTNSLISDSSWLDNGTLVTAIGNGLFYFDNSLPEDQSLLFPASLKRSAKNIFDLAYQLNGILPVFHPQLLQQLLLRNQPFLFTNILLRFYLCLKDDVDMHFLLNMDCSEFYCCDEEISKDLLIKSLSQNSAEILNPAELDFEETSVSKHLGLYIDEMIKKLTALLKVKKVKTLTRSSQFLLLNLIEAFNKARALRDSLDLNGKRYCIMLNQYVLSKHQRQLTSLPTREMAWAFHSSNKAVLLDHTKKLHGKPLLWNAVEEYAIPFWLNEQLLKDVFLELSRNHYAEIDDRNPENVSLYHIALHKINVFRDLWRLASWHKESARTVKLLSNDFSKKKWKVVASKNAFALLSKHRYFYASAFFLLADSCYDAAKVCIRNLKSISLAIAMTRVYEGDDGPTLKRLINEYVLPLAVSQNDRWLTNWSFTILKQEKKALQSLVSPIRSLVSDNDFIQLYTSDKNDQEIHENKDSQRNSTNEPVRNKFPSDDPAFILLYECLRSSNVQIDESLEYRFVLHNANVYCQLGCDLIALGLLRNWKFQKNPATAHLETEDYMVTDKQSAVEKTHDSPKLGKTLMGQDIRPTPDDVPEFNESAFSFE.

Composition is skewed to basic and acidic residues over residues 1161–1171 (DQEIHENKDSQ) and 1260–1269 (AVEKTHDSPK). 2 disordered regions span residues 1161–1182 (DQEI…VRNK) and 1260–1297 (AVEK…FSFE).

As to quaternary structure, component of the RAVE complex composed of rav1, rav2 and skp1. Interacts with vam2.

Its subcellular location is the cytoplasm. The protein resides in the nucleus. The protein localises to the endomembrane system. Component of the RAVE complex which is required for stable assembly of the vacuolar ATPase complex V-ATPase. This chain is Regulator of V-ATPase in vacuolar membrane protein 1 (rav1), found in Schizosaccharomyces pombe (strain 972 / ATCC 24843) (Fission yeast).